A 564-amino-acid chain; its full sequence is Poly(U)-binding-splicing factor PUF60 (564 aa).

The segment at 1-521 is inhibits homodimerization; the sequence is MATATIALQV…EDAEIIVKIF (521 aa). The tract at residues 37–61 is disordered; it reads KWKPPQGTESIKMENGQSTGTKLGL. Residue Lys48 forms a Glycyl lysine isopeptide (Lys-Gly) (interchain with G-Cter in SUMO2) linkage. Thr65 is subject to Phosphothreonine. The inhibits transcriptional repression, interaction with ERCC3 and apoptosis induction stretch occupies residues 82–564; sequence QSIKSVLVKQ…ERFDNSDLSA (483 aa). Lys85 participates in a covalent cross-link: Glycyl lysine isopeptide (Lys-Gly) (interchain with G-Cter in SUMO2). Ser117 bears the Phosphoserine mark. RRM domains follow at residues 134 to 212 and 231 to 309; these read CRVY…RPSN and NRIY…KAVT. Residue Ser249 is modified to Phosphoserine. Lys256 is modified (N6-acetyllysine). Position 319 is a phosphothreonine (Thr319). Residues 421-442 are disordered; the sequence is KKEKEEEELFPESERPEMLSEQ. Lys424 is covalently cross-linked (Glycyl lysine isopeptide (Lys-Gly) (interchain with G-Cter in SUMO2)). Basic and acidic residues predominate over residues 432-442; the sequence is ESERPEMLSEQ. N6-acetyllysine is present on Lys459. Lys463 participates in a covalent cross-link: Glycyl lysine isopeptide (Lys-Gly) (interchain with G-Cter in SUMO2). The RRM 3; atypical domain maps to 467–554; sequence TVMVLRNMVD…RKVVAEVYDQ (88 aa).

The protein belongs to the RRM half pint family. Homodimer. Associates with the spliceosome. Found in a complex with RO60 and Y5 RNA. Found in a complex with FUBP1 and far upstream element (FUSE) DNA segment. Interacts directly with ERCC3. Interacts with CDK7 and GTF2H1. Interacts with SRSF11/P54. Interacts with ARGLU1; interaction may be involved in ARGLU1-mediated modulation of alternative splicing.

Its subcellular location is the nucleus. Functionally, DNA- and RNA-binding protein, involved in several nuclear processes such as pre-mRNA splicing, apoptosis and transcription regulation. In association with FUBP1 regulates MYC transcription at the P2 promoter through the core-TFIIH basal transcription factor. Acts as a transcriptional repressor through the core-TFIIH basal transcription factor. Represses FUBP1-induced transcriptional activation but not basal transcription. Decreases ERCC3 helicase activity. Is also involved in pre-mRNA splicing. Promotes splicing of an intron with weak 3'-splice site and pyrimidine tract in a cooperative manner with U2AF2. Involved in apoptosis induction when overexpressed in HeLa cells. Modulates alternative splicing of several mRNAs. Binds to relaxed DNA of active promoter regions. Binds to the pyrimidine tract and 3'-splice site regions of pre-mRNA; binding is enhanced in presence of U2AF2. Binds to Y5 RNA in association with RO60. Binds to poly(U) RNA. The polypeptide is Poly(U)-binding-splicing factor PUF60 (Rattus norvegicus (Rat)).